The sequence spans 116 residues: Venom protein 54.1 (116 aa).

Positions 1-19 (MNFQVFSLIFFNFVYYCSC) are cleaved as a signal peptide.

In terms of processing, contains 3 disulfide bonds. Expressed by the venom gland.

It is found in the secreted. This Lychas mucronatus (Chinese swimming scorpion) protein is Venom protein 54.1.